The primary structure comprises 674 residues: MNQYQNKNEYEILESSQNNMNMPNRYPFADDPNAVMKNGNYKDWVNECEGSNISPSPAAAITSKIVSIVLKTLAKAVASSLADSIKSSLGISKTITENNVSQVSMVQVHQIINRRIQETILDLGESSLNGLVAIYNRDYLGALEAWNNNKSNINYQTNVAEAFKTVEREFFTKLKGIYRTSSSQITLLPTFTQAANLHLSMLRDAVMYQEGWNLQSHINYSKELDDALEDYTNYCVEVYTKGLNALRGSTAIDWLEFNSFRRDMTLMVLDLVAIFPNYNPVRYPLSTKISLSRKIYTDPVGRTDSPSFGDWTNTGRTLANFNDLEREVTDSPSLVKWLGDMTIYTGAIDSYRPTSPGDRIGVWYGNINAFYHTGRTDVVMFRQTGDTAYEDPSTFISNILYDDIYKLDLRAAAVSTIQGAMDTTFGVSSSRFFDIRGRNQLYQSNKPYPSLPITITFPGEESSEGNANDYSHLLCDVKILQEDSSNICEGRSSLLSHAWTHASLDRNNTILPDEITQIPAVTAYELRGNSSVVAGPGSTGGDLVKMSYHSVWSFKVYCSELKNYRVRIRYASHGNCQFLMKRWPSTGVAPRQWARHNVQGTFSNSMRYEAFKYLDIFTITPEENNFAFTIDLESGGDLFIDKIEFIPVSGSAFEYEGKQNIEKTQKAVNDLFIN.

This sequence belongs to the delta endotoxin family.

Functionally, promotes colloidosmotic lysis by binding to the midgut epithelial cells of insects. This Bacillus thuringiensis subsp. jegathesan protein is Pesticidal crystal protein Cry24Aa (cry24Aa).